The chain runs to 386 residues: tRNA-specific 2-thiouridylase MnmA (386 aa).

ATP is bound by residues 9–16 (GMSGGVDS) and Met35. An interaction with target base in tRNA region spans residues 95 to 97 (NPD). Catalysis depends on Cys100, which acts as the Nucleophile. Cysteines 100 and 196 form a disulfide. Gly124 is an ATP binding site. Residues 146–148 (KDQ) are interaction with tRNA. Cys196 (cysteine persulfide intermediate) is an active-site residue. The interaction with tRNA stretch occupies residues 308 to 309 (RY).

This sequence belongs to the MnmA/TRMU family.

Its subcellular location is the cytoplasm. The enzyme catalyses S-sulfanyl-L-cysteinyl-[protein] + uridine(34) in tRNA + AH2 + ATP = 2-thiouridine(34) in tRNA + L-cysteinyl-[protein] + A + AMP + diphosphate + H(+). Its function is as follows. Catalyzes the 2-thiolation of uridine at the wobble position (U34) of tRNA, leading to the formation of s(2)U34. This chain is tRNA-specific 2-thiouridylase MnmA, found in Burkholderia thailandensis (strain ATCC 700388 / DSM 13276 / CCUG 48851 / CIP 106301 / E264).